The primary structure comprises 237 residues: RNA-binding protein 38 (237 aa).

The interval 1 to 24 (MLLQPACSPSVFPRPSAAPSAMHG) is disordered. The region spanning 32 to 109 (TKIFVGGLPY…RKANVNLAYL (78 aa)) is the RRM domain.

The protein belongs to the RBM38 family. Expressed in cardiac and skeletal muscle tissues.

The protein resides in the cytoplasm. Its subcellular location is the cytosol. The protein localises to the nucleus. Functionally, RNA-binding protein that specifically bind the 3'-UTR of CDKN1A transcripts, leading to maintain the stability of CDKN1A transcripts, thereby acting as a mediator of the p53/TP53 family to regulate CDKN1A. CDKN1A is a cyclin-dependent kinase inhibitor transcriptionally regulated by the p53/TP53 family to induce cell cycle arrest. Has the ability to induce cell cycle arrest in G1 and maintain the stability of CDKN1A transcripts induced by p53/TP53. Also acts as a mRNA splicing factor. Specifically regulates the expression of FGFR2-IIIb, an epithelial cell-specific isoform of FGFR2. Plays a role in myogenic differentiation. This is RNA-binding protein 38 (Rbm38) from Mus musculus (Mouse).